A 333-amino-acid polypeptide reads, in one-letter code: Ribosomal RNA large subunit methyltransferase F (333 aa).

The span at 1-10 (MPQPPKRPRK) shows a compositional bias: basic residues. A disordered region spans residues 1-31 (MPQPPKRPRKPAPAAVKTAPAKGELHPRNRH). Positions 12 to 22 (APAAVKTAPAK) are enriched in low complexity.

This sequence belongs to the methyltransferase superfamily. METTL16/RlmF family.

Its subcellular location is the cytoplasm. The enzyme catalyses adenosine(1618) in 23S rRNA + S-adenosyl-L-methionine = N(6)-methyladenosine(1618) in 23S rRNA + S-adenosyl-L-homocysteine + H(+). Its function is as follows. Specifically methylates the adenine in position 1618 of 23S rRNA. The sequence is that of Ribosomal RNA large subunit methyltransferase F from Ectopseudomonas mendocina (strain ymp) (Pseudomonas mendocina).